Consider the following 247-residue polypeptide: Chymase (247 aa).

The first 19 residues, 1–19 (MLLLPLPLLLLFLCSRAEA), serve as a signal peptide directing secretion. A propeptide spans 20-21 (GE) (activation peptide). The 224-residue stretch at 22–245 (IIGGTECKPH…YRPWINKILQ (224 aa)) folds into the Peptidase S1 domain. A disulfide bond links Cys51 and Cys67. His66 acts as the Charge relay system in catalysis. Residues Asn80 and Asn103 are each glycosylated (N-linked (GlcNAc...) asparagine). Residue Asp110 is the Charge relay system of the active site. 2 disulfides stabilise this stretch: Cys144-Cys209 and Cys175-Cys188. Ser203 functions as the Charge relay system in the catalytic mechanism.

Belongs to the peptidase S1 family. Granzyme subfamily.

It is found in the secreted. The protein resides in the cytoplasmic granule. The enzyme catalyses Preferential cleavage: Phe-|-Xaa &gt; Tyr-|-Xaa &gt; Trp-|-Xaa &gt; Leu-|-Xaa.. In terms of biological role, major secreted protease of mast cells with suspected roles in vasoactive peptide generation, extracellular matrix degradation, and regulation of gland secretion. The protein is Chymase (CMA1) of Papio hamadryas (Hamadryas baboon).